The primary structure comprises 210 residues: Large ribosomal subunit protein uL15 (210 aa).

2 disordered regions span residues 1-64 and 76-104; these read MADD…AAPR and AAGA…TKGT. Over residues 9 to 54 the composition is skewed to low complexity; it reads EAAAKPVAEKATATALAKKAPAKAAAADKAAPAAKGETVAAKPAKA. The segment covering 79–93 has biased composition (basic and acidic residues); sequence AKKEKTRVGRGEGSK.

The protein belongs to the universal ribosomal protein uL15 family. Part of the 50S ribosomal subunit.

Functionally, binds to the 23S rRNA. The polypeptide is Large ribosomal subunit protein uL15 (Leifsonia xyli subsp. xyli (strain CTCB07)).